We begin with the raw amino-acid sequence, 125 residues long: uncharacterized protein (125 aa).

Residues 100-120 (YFKVAFALAVLTPLAIWIFYI) form a helical membrane-spanning segment.

It is found in the membrane. This is an uncharacterized protein from Saccharomyces cerevisiae (strain ATCC 204508 / S288c) (Baker's yeast).